Consider the following 113-residue polypeptide: MLARRNRVTSGADYRIIVRRGRRTTTGTAVVSALAGPDDAPTRFGFIISKKVGNAVTRNLVRRRLKAVSAGLLHSVPPGTSIVIRVLPGMERTAWDTLQEEMASAVTRAVRTI.

The protein belongs to the RnpA family. In terms of assembly, consists of a catalytic RNA component (M1 or rnpB) and a protein subunit.

The enzyme catalyses Endonucleolytic cleavage of RNA, removing 5'-extranucleotides from tRNA precursor.. Functionally, RNaseP catalyzes the removal of the 5'-leader sequence from pre-tRNA to produce the mature 5'-terminus. It can also cleave other RNA substrates such as 4.5S RNA. The protein component plays an auxiliary but essential role in vivo by binding to the 5'-leader sequence and broadening the substrate specificity of the ribozyme. In Clavibacter michiganensis subsp. michiganensis (strain NCPPB 382), this protein is Ribonuclease P protein component.